The chain runs to 197 residues: Phosphoheptose isomerase (197 aa).

The SIS domain maps to 34–196 (MVNCLLGGNK…DRTLFPQDEQ (163 aa)). 49-51 (NGG) lines the substrate pocket. Residues histidine 58 and glutamate 62 each coordinate Zn(2+). Residues glutamate 62, 91-92 (ND), 117-119 (STS), serine 122, and glutamine 172 contribute to the substrate site. Positions 172 and 180 each coordinate Zn(2+).

Belongs to the SIS family. GmhA subfamily. In terms of assembly, homotetramer. Zn(2+) serves as cofactor.

The protein resides in the cytoplasm. It catalyses the reaction 2 D-sedoheptulose 7-phosphate = D-glycero-alpha-D-manno-heptose 7-phosphate + D-glycero-beta-D-manno-heptose 7-phosphate. It participates in carbohydrate biosynthesis; D-glycero-D-manno-heptose 7-phosphate biosynthesis; D-glycero-alpha-D-manno-heptose 7-phosphate and D-glycero-beta-D-manno-heptose 7-phosphate from sedoheptulose 7-phosphate: step 1/1. In terms of biological role, catalyzes the isomerization of sedoheptulose 7-phosphate in D-glycero-D-manno-heptose 7-phosphate. The sequence is that of Phosphoheptose isomerase from Shewanella pealeana (strain ATCC 700345 / ANG-SQ1).